The primary structure comprises 577 residues: Arginine--tRNA ligase (577 aa).

Residues 122–132 (PNVAKEMHVGH) carry the 'HIGH' region motif.

This sequence belongs to the class-I aminoacyl-tRNA synthetase family. In terms of assembly, monomer.

It is found in the cytoplasm. The catalysed reaction is tRNA(Arg) + L-arginine + ATP = L-arginyl-tRNA(Arg) + AMP + diphosphate. This Salmonella paratyphi A (strain ATCC 9150 / SARB42) protein is Arginine--tRNA ligase.